The sequence spans 545 residues: Degenerin-like protein asic-2 (545 aa).

The Cytoplasmic portion of the chain corresponds to 1 to 34 (MRGGGFVQIFKDFSNWSTVAVVPHVANANNKISR). The helical transmembrane segment at 35-55 (IFWIAIFLFVLGMFAYELYIL) threads the bilayer. Residues 56 to 457 (IAKFFSYPAT…NVINDLGGQA (402 aa)) are Extracellular-facing. Residues Cys-83 and Cys-191 are joined by a disulfide bond. Asn-201 is a glycosylation site (N-linked (GlcNAc...) asparagine). 5 disulfide bridges follow: Cys-284/Cys-370, Cys-305/Cys-366, Cys-309/Cys-364, Cys-318/Cys-343, and Cys-320/Cys-334. Asn-350 carries N-linked (GlcNAc...) asparagine glycosylation. A helical transmembrane segment spans residues 458–478 (GLWLGLSVISVVEMTGLMLVM). Positions 462–464 (GLS) match the GAS motif; ion selectivity filter motif. Over 479-545 (GAFCVTGGAI…NKGDEEKKKK (67 aa)) the chain is Cytoplasmic. Composition is skewed to basic and acidic residues over residues 514–523 (DHLEKKHGEM) and 534–545 (IENKGDEEKKKK). The segment at 514 to 545 (DHLEKKHGEMESGSDGEVDDIENKGDEEKKKK) is disordered.

This sequence belongs to the amiloride-sensitive sodium channel (TC 1.A.6) family. In terms of assembly, can form homotrimers. Heterotrimer; forms functional heterotrimers producing channel with different properties.

The protein localises to the cell membrane. It catalyses the reaction Na(+)(in) = Na(+)(out). Its activity is regulated as follows. Inhibited by the diuretic drug amiloride. Could form pH-gated heterotrimeric sodium channels that act as postsynaptic excitatory sensors in the nervous system, generating rapid, transient inward currents that fully desensitize upon extracellular acidification. The protein is Degenerin-like protein asic-2 (asic-2) of Caenorhabditis elegans.